Here is a 1146-residue protein sequence, read N- to C-terminus: Probable transport protein MmpL12 (1146 aa).

Transmembrane regions (helical) follow at residues Leu-25–Leu-45, Val-206–Leu-226, Ala-254–Ile-274, Ile-298–Phe-318, Ala-330–Leu-350, Thr-382–Ile-402, Phe-826–Leu-846, Ile-850–Val-870, Leu-883–Ile-903, Val-928–Ile-948, and Asn-949–Val-969.

This sequence belongs to the resistance-nodulation-cell division (RND) (TC 2.A.6) family. MmpL subfamily.

Its subcellular location is the cell membrane. This chain is Probable transport protein MmpL12 (mmpL12), found in Mycobacterium tuberculosis (strain CDC 1551 / Oshkosh).